A 215-amino-acid polypeptide reads, in one-letter code: Ribonuclease T (215 aa).

Positions 20-194 constitute an Exonuclease domain; that stretch reads VVIDVETAGF…YDTERTAVLF (175 aa). Asp-23, Glu-25, His-181, and Asp-186 together coordinate Mg(2+). The active-site Proton donor/acceptor is His-181.

This sequence belongs to the RNase T family. As to quaternary structure, homodimer. Mg(2+) serves as cofactor.

Its function is as follows. Trims short 3' overhangs of a variety of RNA species, leaving a one or two nucleotide 3' overhang. Responsible for the end-turnover of tRNA: specifically removes the terminal AMP residue from uncharged tRNA (tRNA-C-C-A). Also appears to be involved in tRNA biosynthesis, especially in strains lacking other exoribonucleases. In terms of biological role, a general regulator of small RNAs (sRNA), contributes to their degradation. Upon overexpression suppresses sRNA-mediated RhyB-silencing of multiple RNA targets; overexpression leads to nearly complete loss of RhyB sRNA. This Escherichia coli (strain K12) protein is Ribonuclease T.